Here is a 556-residue protein sequence, read N- to C-terminus: MKLLTNIGTLLALSPVQQVSATPHTGEHYNLVKLEGYGSVSGTTVNSTLTKKDLPTTVDAWMGIDYALQPTGHRRFKAAEWPKPFKGVKRADSYGKTCIQEIASKTPLESQSEACLNFNVFRTKGVPLSKKLPVLVWIHGGAFFSGSWASFDGAAFAASSKEPIVVVNFHYRVNSLGFLPSKLFKDEGLSNLGIRDQRLLFEFVQKHIGAFGGDKNAVTIGGRSAGGHSVGIHYFHNYGKDNKALFAQAIHQSGSVTSRAFPNDTYPLYKTQYDEYTAYLGCDNKKTNKATLKCLREADIDSIRNISTKIFYDYNDVLTWPFQPVQGGPLFEKPGSQSGYDGTFYHVPTITSNVNDEGKFYTPGNLETDSEFLDYLHNISPALTKKDLSELSALYPDPAKYDNSPFANSPNSTQYNRISAAWSDYAYICPGQETAYRASTAGVPTWKVRFNTNNSFPAWQGIPHTADTSYTWNGESTQYPEISHIYHGYLSSFVTAGNPNSHRYPGSPEWPAYHGDDESPLQIVVQPGDTKVEKDEIRKEACLWWRDPERAPRLNK.

An N-terminal signal peptide occupies residues methionine 1–alanine 21. Asparagine 46, asparagine 263, asparagine 305, asparagine 411, and asparagine 453 each carry an N-linked (GlcNAc...) asparagine glycan.

The protein belongs to the type-B carboxylesterase/lipase family.

It is found in the secreted. The catalysed reaction is a carboxylic ester + H2O = an alcohol + a carboxylate + H(+). Secreted lipase involved in plant virulence. Has a substrate preference for p-nitrophenyl esters with a carbon chain length of C12 (p-nitrophenyl laureate). The protein is Secreted lipase 4 of Gibberella zeae (strain ATCC MYA-4620 / CBS 123657 / FGSC 9075 / NRRL 31084 / PH-1) (Wheat head blight fungus).